Reading from the N-terminus, the 985-residue chain is Phosphoenolpyruvate carboxylase (985 aa).

The span at 1–17 shows a compositional bias: low complexity; the sequence is MTQSAARRASSRATPAR. The interval 1–55 is disordered; that stretch reads MTQSAARRASSRATPARKTPPAPASQTPAPSPGGTAGTALGPTSRRSSGSAAAKD. Active-site residues include His193 and Lys634.

This sequence belongs to the PEPCase type 1 family. Mg(2+) serves as cofactor.

The catalysed reaction is oxaloacetate + phosphate = phosphoenolpyruvate + hydrogencarbonate. Functionally, forms oxaloacetate, a four-carbon dicarboxylic acid source for the tricarboxylic acid cycle. This chain is Phosphoenolpyruvate carboxylase, found in Ralstonia nicotianae (strain ATCC BAA-1114 / GMI1000) (Ralstonia solanacearum).